We begin with the raw amino-acid sequence, 191 residues long: Signal peptidase IB (191 aa).

At 1–7 the chain is on the cytoplasmic side; sequence MKKELLE. A helical membrane pass occupies residues 8–28; it reads WIISIAVAFVILFIVGKFIVT. Residues 29–191 lie on the Extracellular side of the membrane; that stretch reads PYTIKGESMD…HNFNPENTKN (163 aa). Active-site residues include serine 36 and lysine 77.

Belongs to the peptidase S26 family.

It localises to the cell membrane. The catalysed reaction is Cleavage of hydrophobic, N-terminal signal or leader sequences from secreted and periplasmic proteins.. Its function is as follows. Essential for cell viability. The protein is Signal peptidase IB (spsB) of Staphylococcus aureus (strain Mu50 / ATCC 700699).